The chain runs to 885 residues: Isoleucine--tRNA ligase (885 aa).

A 'HIGH' region motif is present at residues proline 59–histidine 69. Glutamate 550 lines the L-isoleucyl-5'-AMP pocket. The 'KMSKS' region signature appears at lysine 591 to serine 595. Lysine 594 provides a ligand contact to ATP. Cysteine 861, cysteine 864, cysteine 877, and cysteine 880 together coordinate Zn(2+).

It belongs to the class-I aminoacyl-tRNA synthetase family. IleS type 1 subfamily. As to quaternary structure, monomer. It depends on Zn(2+) as a cofactor.

The protein localises to the cytoplasm. It carries out the reaction tRNA(Ile) + L-isoleucine + ATP = L-isoleucyl-tRNA(Ile) + AMP + diphosphate. In terms of biological role, catalyzes the attachment of isoleucine to tRNA(Ile). As IleRS can inadvertently accommodate and process structurally similar amino acids such as valine, to avoid such errors it has two additional distinct tRNA(Ile)-dependent editing activities. One activity is designated as 'pretransfer' editing and involves the hydrolysis of activated Val-AMP. The other activity is designated 'posttransfer' editing and involves deacylation of mischarged Val-tRNA(Ile). In Mycoplasma mobile (strain ATCC 43663 / 163K / NCTC 11711) (Mesomycoplasma mobile), this protein is Isoleucine--tRNA ligase.